A 453-amino-acid chain; its full sequence is Allantoinase (453 aa).

Zn(2+) contacts are provided by H59, H61, K146, H186, H242, and D315. K146 carries the N6-carboxylysine modification.

This sequence belongs to the metallo-dependent hydrolases superfamily. Allantoinase family. In terms of assembly, homotetramer. Requires Zn(2+) as cofactor. Post-translationally, carboxylation allows a single lysine to coordinate two zinc ions.

The catalysed reaction is (S)-allantoin + H2O = allantoate + H(+). The protein operates within nitrogen metabolism; (S)-allantoin degradation; allantoate from (S)-allantoin: step 1/1. Functionally, catalyzes the conversion of allantoin (5-ureidohydantoin) to allantoic acid by hydrolytic cleavage of the five-member hydantoin ring. The chain is Allantoinase from Escherichia coli O9:H4 (strain HS).